A 208-amino-acid chain; its full sequence is 3-demethoxyubiquinol 3-hydroxylase (208 aa).

The Fe cation site is built by glutamate 57, glutamate 87, histidine 90, glutamate 139, glutamate 171, and histidine 174.

It belongs to the COQ7 family. Fe cation serves as cofactor.

It is found in the cell membrane. It catalyses the reaction a 5-methoxy-2-methyl-3-(all-trans-polyprenyl)benzene-1,4-diol + AH2 + O2 = a 3-demethylubiquinol + A + H2O. Its pathway is cofactor biosynthesis; ubiquinone biosynthesis. In terms of biological role, catalyzes the hydroxylation of 2-nonaprenyl-3-methyl-6-methoxy-1,4-benzoquinol during ubiquinone biosynthesis. This Nitrosomonas europaea (strain ATCC 19718 / CIP 103999 / KCTC 2705 / NBRC 14298) protein is 3-demethoxyubiquinol 3-hydroxylase.